The primary structure comprises 163 residues: Translation initiation factor IF-3-like (163 aa).

It belongs to the IF-3 family.

This Nostoc sp. (strain PCC 7120 / SAG 25.82 / UTEX 2576) protein is Translation initiation factor IF-3-like.